Here is a 229-residue protein sequence, read N- to C-terminus: 1-(5-phosphoribosyl)-5-[(5-phosphoribosylamino)methylideneamino] imidazole-4-carboxamide isomerase (229 aa).

Catalysis depends on aspartate 8, which acts as the Proton acceptor. Aspartate 125 acts as the Proton donor in catalysis.

It belongs to the HisA/HisF family.

The protein resides in the cytoplasm. It catalyses the reaction 1-(5-phospho-beta-D-ribosyl)-5-[(5-phospho-beta-D-ribosylamino)methylideneamino]imidazole-4-carboxamide = 5-[(5-phospho-1-deoxy-D-ribulos-1-ylimino)methylamino]-1-(5-phospho-beta-D-ribosyl)imidazole-4-carboxamide. Its pathway is amino-acid biosynthesis; L-histidine biosynthesis; L-histidine from 5-phospho-alpha-D-ribose 1-diphosphate: step 4/9. This is 1-(5-phosphoribosyl)-5-[(5-phosphoribosylamino)methylideneamino] imidazole-4-carboxamide isomerase from Thermococcus onnurineus (strain NA1).